Consider the following 475-residue polypeptide: Cytosolic enolase 3 (475 aa).

Residue Ser2 is modified to N-acetylserine. Substrate contacts are provided by His200 and Glu209. Catalysis depends on Asp252, which acts as the Proton donor. The Mg(2+) site is built by Asp287, Glu336, and Asp361. Positions 336 and 361 each coordinate substrate. Residue Lys386 is the Proton acceptor of the active site. Residues 413-416 and Lys437 contribute to the substrate site; that span reads SHRC.

Belongs to the enolase family. Homodimer. Mg(2+) serves as cofactor.

It localises to the cytoplasm. The protein resides in the nucleus. It carries out the reaction (2R)-2-phosphoglycerate = phosphoenolpyruvate + H2O. Its pathway is carbohydrate degradation; glycolysis; pyruvate from D-glyceraldehyde 3-phosphate: step 4/5. The sequence is that of Cytosolic enolase 3 (ENO3) from Arabidopsis thaliana (Mouse-ear cress).